A 242-amino-acid chain; its full sequence is 1-(5-phosphoribosyl)-5-[(5-phosphoribosylamino)methylideneamino] imidazole-4-carboxamide isomerase (242 aa).

D8 serves as the catalytic Proton acceptor. D130 serves as the catalytic Proton donor.

Belongs to the HisA/HisF family.

It localises to the cytoplasm. The enzyme catalyses 1-(5-phospho-beta-D-ribosyl)-5-[(5-phospho-beta-D-ribosylamino)methylideneamino]imidazole-4-carboxamide = 5-[(5-phospho-1-deoxy-D-ribulos-1-ylimino)methylamino]-1-(5-phospho-beta-D-ribosyl)imidazole-4-carboxamide. Its pathway is amino-acid biosynthesis; L-histidine biosynthesis; L-histidine from 5-phospho-alpha-D-ribose 1-diphosphate: step 4/9. This chain is 1-(5-phosphoribosyl)-5-[(5-phosphoribosylamino)methylideneamino] imidazole-4-carboxamide isomerase, found in Acidithiobacillus ferrooxidans (strain ATCC 53993 / BNL-5-31) (Leptospirillum ferrooxidans (ATCC 53993)).